A 347-amino-acid chain; its full sequence is Histone deacetylase 11 (347 aa).

The segment at 14 to 318 (KRWPIVYSPR…ARIIADSILN (305 aa)) is histone deacetylase. Histidine 143 is a catalytic residue.

It belongs to the histone deacetylase family. Interacts with HDAC6.

The protein localises to the nucleus. It catalyses the reaction N(6)-acetyl-L-lysyl-[histone] + H2O = L-lysyl-[histone] + acetate. Its function is as follows. Responsible for the deacetylation of lysine residues on the N-terminal part of the core histones (H2A, H2B, H3 and H4). Histone deacetylation gives a tag for epigenetic repression and plays an important role in transcriptional regulation, cell cycle progression and developmental events. Histone deacetylases act via the formation of large multiprotein complexes. The chain is Histone deacetylase 11 (Hdac11) from Mus musculus (Mouse).